Reading from the N-terminus, the 361-residue chain is Ribosomal RNA large subunit methyltransferase M (361 aa).

Residues serine 187, 220 to 223 (CPGG), aspartate 239, aspartate 259, and aspartate 276 each bind S-adenosyl-L-methionine. Lysine 305 serves as the catalytic Proton acceptor.

This sequence belongs to the class I-like SAM-binding methyltransferase superfamily. RNA methyltransferase RlmE family. RlmM subfamily. In terms of assembly, monomer.

Its subcellular location is the cytoplasm. It catalyses the reaction cytidine(2498) in 23S rRNA + S-adenosyl-L-methionine = 2'-O-methylcytidine(2498) in 23S rRNA + S-adenosyl-L-homocysteine + H(+). Its function is as follows. Catalyzes the 2'-O-methylation at nucleotide C2498 in 23S rRNA. This is Ribosomal RNA large subunit methyltransferase M from Shewanella sp. (strain MR-4).